Reading from the N-terminus, the 245-residue chain is Uridylate kinase (245 aa).

12 to 15 is a binding site for ATP; sequence KLSG. Residues 20-25 form an involved in allosteric activation by GTP region; it reads GERGVG. Gly54 provides a ligand contact to UMP. 2 residues coordinate ATP: Gly55 and Arg59. Residues Asp74 and 135-142 each bind UMP; that span reads IGSPYFST. Residues Asn163, Tyr169, and Asp172 each coordinate ATP.

The protein belongs to the UMP kinase family. As to quaternary structure, homohexamer.

Its subcellular location is the cytoplasm. It catalyses the reaction UMP + ATP = UDP + ADP. Its pathway is pyrimidine metabolism; CTP biosynthesis via de novo pathway; UDP from UMP (UMPK route): step 1/1. Its activity is regulated as follows. Allosterically activated by GTP. Inhibited by UTP. Its function is as follows. Catalyzes the reversible phosphorylation of UMP to UDP. The polypeptide is Uridylate kinase (Streptococcus pneumoniae serotype 2 (strain D39 / NCTC 7466)).